Here is a 205-residue protein sequence, read N- to C-terminus: Urease accessory protein UreE (205 aa).

The interval 171–205 (AHEAHPHAHSHAGGHGHVHSGHGHGGKHGEHDAES) is disordered. Residues 177–196 (HAHSHAGGHGHVHSGHGHGG) show a composition bias toward basic residues.

This sequence belongs to the UreE family.

It is found in the cytoplasm. Its function is as follows. Involved in urease metallocenter assembly. Binds nickel. Probably functions as a nickel donor during metallocenter assembly. The chain is Urease accessory protein UreE from Bordetella bronchiseptica (strain ATCC BAA-588 / NCTC 13252 / RB50) (Alcaligenes bronchisepticus).